The primary structure comprises 216 residues: Ribosomal RNA small subunit methyltransferase G (216 aa).

S-adenosyl-L-methionine-binding positions include Gly-82, Leu-87, 135–136 (AE), and Arg-148.

It belongs to the methyltransferase superfamily. RNA methyltransferase RsmG family.

It localises to the cytoplasm. The catalysed reaction is guanosine(527) in 16S rRNA + S-adenosyl-L-methionine = N(7)-methylguanosine(527) in 16S rRNA + S-adenosyl-L-homocysteine. In terms of biological role, specifically methylates the N7 position of guanine in position 527 of 16S rRNA. The chain is Ribosomal RNA small subunit methyltransferase G from Caulobacter vibrioides (strain ATCC 19089 / CIP 103742 / CB 15) (Caulobacter crescentus).